A 193-amino-acid chain; its full sequence is Dihydrofolate reductase (193 aa).

Residues 1–193 form the DHFR domain; the sequence is MIKLVFRYSP…VTTLTESVYK (193 aa). NADP(+) is bound by residues Arg7, 22 to 27, 52 to 55, and 73 to 77; these read FGLGDG, GAKT, and DLARD.

It belongs to the dihydrofolate reductase family.

The enzyme catalyses (6S)-5,6,7,8-tetrahydrofolate + NADP(+) = 7,8-dihydrofolate + NADPH + H(+). It functions in the pathway cofactor biosynthesis; tetrahydrofolate biosynthesis; 5,6,7,8-tetrahydrofolate from 7,8-dihydrofolate: step 1/1. In terms of biological role, key enzyme in folate metabolism. Catalyzes an essential reaction for de novo glycine and purine synthesis, and for DNA precursor synthesis. The protein is Dihydrofolate reductase (frd) of Escherichia coli (Bacteriophage T4).